The sequence spans 343 residues: MSSQAGNVGSSSSSLAGVRMVVSPKAQLRHARLPAASASMYSDAKYDLNNYKFEPIKESIVAREMTRRYMTEMITHADTDVVVVGAGSAGLSCAYELSKNPNVKVAIIEQSVSPGGGAWLGGQLFSAMVVRKPAHRFLDEIEVPYEELENYVVIKHAALFTSTIMSKLLARPNVKLFNAVAAEDLIIRGDRVSGVVTNWALVAQNHNTQSCMDPNVMEAKVVVSSCGHDGPFGATGVKRLRSIGMIESVPGMKCLDMNAAEDAIVKHTREVVPGMIVTGMEVAEIDGSPRMGPTFGAMMISGQKAAHLALKALGLPNELDGNYKLNVHPELVLASTDDETASA.

Substrate contacts are provided by residues alanine 89, 109-110 (EQ), glycine 117, and alanine 182. Cysteine 211 carries the 2,3-didehydroalanine (Cys) modification. Residues aspartate 213, histidine 228, methionine 280, and 290-292 (RMG) each bind substrate.

Belongs to the THI4 family. In terms of assembly, homooctamer. The cofactor is Fe cation. Post-translationally, during the catalytic reaction, a sulfide is transferred from Cys-211 to a reaction intermediate, generating a dehydroalanine residue.

The protein localises to the plastid. Its subcellular location is the chloroplast. The catalysed reaction is [ADP-thiazole synthase]-L-cysteine + glycine + NAD(+) = [ADP-thiazole synthase]-dehydroalanine + ADP-5-ethyl-4-methylthiazole-2-carboxylate + nicotinamide + 3 H2O + 2 H(+). Functionally, involved in biosynthesis of the thiamine precursor thiazole. Catalyzes the conversion of NAD and glycine to adenosine diphosphate 5-(2-hydroxyethyl)-4-methylthiazole-2-carboxylic acid (ADT), an adenylated thiazole intermediate. The reaction includes an iron-dependent sulfide transfer from a conserved cysteine residue of the protein to a thiazole intermediate. The enzyme can only undergo a single turnover, which suggests it is a suicide enzyme. May have additional roles in adaptation to various stress conditions and in DNA damage tolerance. The polypeptide is Thiamine thiazole synthase 4, chloroplastic (Physcomitrium patens (Spreading-leaved earth moss)).